Consider the following 334-residue polypeptide: Phosphoribosylformylglycinamidine cyclo-ligase (334 aa).

This sequence belongs to the AIR synthase family.

It localises to the cytoplasm. The catalysed reaction is 2-formamido-N(1)-(5-O-phospho-beta-D-ribosyl)acetamidine + ATP = 5-amino-1-(5-phospho-beta-D-ribosyl)imidazole + ADP + phosphate + H(+). The protein operates within purine metabolism; IMP biosynthesis via de novo pathway; 5-amino-1-(5-phospho-D-ribosyl)imidazole from N(2)-formyl-N(1)-(5-phospho-D-ribosyl)glycinamide: step 2/2. The chain is Phosphoribosylformylglycinamidine cyclo-ligase from Thermococcus gammatolerans (strain DSM 15229 / JCM 11827 / EJ3).